A 341-amino-acid chain; its full sequence is Fructose-1,6-bisphosphatase, cytosolic (341 aa).

Mg(2+) is bound by residues Glu-100, Asp-121, Leu-123, and Asp-124. Residues 124–127 (DGSS), Asn-215, Tyr-247, Tyr-267, and Lys-277 each bind substrate. Glu-283 contributes to the Mg(2+) binding site.

This sequence belongs to the FBPase class 1 family. It depends on Mg(2+) as a cofactor.

It localises to the cytoplasm. The catalysed reaction is beta-D-fructose 1,6-bisphosphate + H2O = beta-D-fructose 6-phosphate + phosphate. This chain is Fructose-1,6-bisphosphatase, cytosolic (FBPban1), found in Musa acuminata (Banana).